Here is a 935-residue protein sequence, read N- to C-terminus: Potassium channel AKT1 (935 aa).

Topologically, residues 1 to 106 (MARWGAARMA…YDRRYRIWET (106 aa)) are cytoplasmic. The chain crosses the membrane as a helical span at residues 107-127 (FLIVLVVYSAWVSPFEFGFIP). Topologically, residues 128-136 (KPTGALATA) are extracellular. The chain crosses the membrane as a helical span at residues 137 to 157 (DNVVNAFFAVDIILTFFVAYL). Over 158-178 (DKMSYMLEDDPKKIAWRYSTT) the chain is Cytoplasmic. Residues 179–199 (WLVLDVASTIPSEFARRILPS) traverse the membrane as a helical segment. The Extracellular segment spans residues 200–205 (KLRSYG). Residues 206–226 (FFNMLRLWRLRRVSSLFSRLE) form a helical; Voltage-sensor membrane-spanning segment. Over 227-240 (KDRHFNYFWVRCAK) the chain is Cytoplasmic. A helical membrane pass occupies residues 241–261 (LICVTLFAVHCAACFYYLLAD). Topologically, residues 262 to 288 (RYPVPTSTWIGNYMADFHERSLWIRYV) are extracellular. Residues 289–308 (TSVYWSITTLTTVGYGDLHA) constitute an intramembrane region (pore-forming). Residues 309-312 (ENTR) lie on the Extracellular side of the membrane. The helical transmembrane segment at 313 to 333 (EMIFNIFYMLFNLGLTAYLIG) threads the bilayer. Over 334–935 (NMTNLVVHGT…WDAEKMKGKS (602 aa)) the chain is Cytoplasmic. Position 419 to 538 (419 to 538 (LFQGVSNDLI…TIIMNNLIQF (120 aa))) interacts with a nucleoside 3',5'-cyclic phosphate. 6 ANK repeats span residues 565-594 (DLPI…DPNE), 598-627 (DGHT…DPNA), 631-660 (EGKV…DLSS), 662-691 (DTGL…DVNR), 695-724 (DGTT…DIDK), and 728-757 (NGWT…ATAS). The tract at residues 826-854 (SQAQRETDHPLSRGGLAATGSPNPSSGSR) is disordered. Over residues 845 to 854 (GSPNPSSGSR) the composition is skewed to polar residues. The KHA domain occupies 859-935 (RVTISCPEKG…WDAEKMKGKS (77 aa)).

This sequence belongs to the potassium channel family. Plant (TC 1.A.1.4) subfamily. As to quaternary structure, the potassium channel is probably a homo- or heterotetrameric complex of pore-forming subunits. Highly expressed in the epidermis and endodermis of roots, and at lower level in cells of the vasculature and the cortex. Expressed in xylem parenchyma, phloem and mesophyll cells of leaves.

Its subcellular location is the membrane. Its function is as follows. Highly selective inward-rectifying potassium channel that mediates potassium uptake by plant roots. This Oryza sativa subsp. indica (Rice) protein is Potassium channel AKT1 (AKT1).